A 3131-amino-acid chain; its full sequence is MSLHTPSDGQQDPALASKTLCEQISRALGLGQDKIENIFPGTPFQRDVIDCAADDKQRAVGHAVFEIPKDIDAARLAAAWKETVLHTPALRTCTFTSKSGDVLQVVLRDSFVFSWMSGPSVDLKEAVVQDEAAAALAGPRCNRFVLLEDPDTKERQLIWTFSHALVDSTFQERILRRVLKAYKDANDEHPRQFETPDSSQATPEEDLQPNPSKMLKIPQAADMDRAVEFWKDHLSGLKCFCLPAFVLSSVYAHPDAKAEHRISYSSSAQQKMSSATICRTALAILLSRYTHSPEALFGIVTEQTPLLEEQLMLDGPTRTVVPIRVSCASEQSVSDIMSTIDSYDQTMRQFAHAGLRNIASAGDDESAACGFQTVLLVSDGDAQPASTWEILKKTEEPEGFIPCTNRALLLSCQMTSSGAHLTARYDQSIIDAEQMARLLRQLGHLIQNLQTSTDLPVEKVDMMTQEDWLEIERWNSDSIDAQDTLIHSEMLKWTSQSPNKAAVAAWDGEWTYAELDNVSSRLAQHINSIDLGKEHAIVPIYFEKSKWVVASMLAVLKAGHAFTLIDPSDPPARTAQVVQQTSATVALTSKLHRETVQSTVGRCIVVDEEFVKSLPQSSELSASVKAHDLAYVIFTSGSTGIPKGIMIEHRSFSSCAIKFGPALGITSDTRALQFGSHAFGACILEIMTTLIHGGCVCIPSDDDRMNNVLEFINRTNVQLGHATPSYMGTFQPEVVPGLKTLVLVGEQMSASVNEVWAPRVQLLNGYGQSESSSICCVAKISPGSSEPNNIGHAVGAHSWIVDPEDPNRLAPIGAVGELVIESAGIARDYIVAPTQDKSPFIKTAPTWYPAKQLPDGFKIYRTGDLACYASDGSIVCLGRMDSQVKIRGQRVELGAVETHLRQQMPDDMTIVVEAVKFSDSSSTTVLTAFLIGAGEKNSHILDQRATREINAKMEQVLPRHSIPAFYISMNNLPQTATGKVDRRKLRIMGSKILSQKTHSTPSQQSQAAISSGTDTYTKLESIWITSLDLEPGSANMSATFFEMGGNSIIAIKMVNMARSNGIELKVSDIYQNPTLAGLKAIVIGTSLPYSLIPKVTRQGPVSEQSYAQNRMWFLDQLSEGASWYLIPFAVRMRGPVDVDALTRALLALEQRHETLRTTFENQDGVGVQIIHDRLSKELQVIDALDGDEGGLKTLYKVETTTFDITSEAGWSSTLIRLGKDDHILSIVMHHIISDGWSIDVLRRELIQLYAAALQGKDPSSALTPLPIQYSDFAVWQKQEAQAAEHERQLQYWKKQLADSSPAKIPTDFPRPDLLSGDAGVVPVAIDGELYQKLRGFCNKHNSTAFSILLAAFRAAHYRLTAVDDAVIGIPIANRNRWELENMIGFFVNTQCMRIAVDETDTFESLVRQVRSTTTAAFAHEDVPFERVVSALQPGHRDLSRTPLAQIMFAVHSQKDLGRFELEGIQSEPIASKAYTRFDVEFHLFQQADGLKGSCNFATDLFKPETIQNVVSVFFQILRHGLDQPETCISVLPLTDGVEELRRLDLLEIKRTNYPRDSSVVDVFREQAAANPEVIAVTDSSSRLTYAELDNKSELLSRWLRRRNLTPETLVSVLAPRSCETIVAYVGILKANLAYLPLDVRSPVTRMKDILSSVSGNTIVLMGSGVEDPGFDLPQLELVRITDTFDETIEDVQDSPQPSATSLAYVVFTSGSTGKPKGVMIEHRAIVRLVKSDNFPGFPSPARMSNVFNPAFDGAIWEINWMLLNGGTVVCIDYLTTLDGKELAAVFAKERVNAAFFAPAMLKLYLVDAREALKNLDFLIVGGERFDTKEAVEAMPLVRGKIANIYGPTEAGIISTCYNIPKDEAYTNGVPIGGSIYNSGAYVMDPNQQLVGLGVMGELVVTGDGVGRGYTNPELNKNRFIDITIEGKTFKAYRTGDRMRARVGDGLLEFFGRMDNQFKIRGNRIEAGEVESAMLSLKNVLNAAIVVRGGGEDEGPLEMVGFIVADDKNDTTEEEETGNQVEGWQDHFESGMYSDISTAVDQSAIGNDFKGWTSMYDGKDIDKGEMQEWLDDAIHTLHNGQIPRDVLEIGTGSGMILFNLNPGLNSYVGLDPSKSAVEFVNRAVESSPKFAGKAKVHVGMATDVNKLGEVHPDLVVFNSVVQYFPTPEYLAEVIDGLIAIPSVKRIFLGDIRSYATNGHFLAARAIHTLGTNNNATKDRVRQKIQELEDREEEFLVEPAFFTTLKERRPDVVKHVEIIPKNMKATNELSAYRYTAVVHLRDETDEPVYHIEKDSWVDFEAKQMDKTALLDHLRLSKDAMSVAVSNITYAHTAFERRIVESLDEDSKDDTKGTLDGAAWLSAVRSEAENRASLTVPDILEIAKEAGFRVEVSAARQWSQSGALDAVFHHFPPSSTDRTLIQFPTDNELRSSLTLANRPLQKLQRRRAALQVREKLQTLVPSYMVPPNIVVLDTMPLNTNGKIDRKELTRRARTLPKQQTAAPVPDFPISDIEITLCEEATEVFGMKVEISDHFFQLGGHSLLATKLISRIQHRLHVRVTVKDVFDSPVFADLAVIIRQGLAMQNPVAEGQDKQGWSSRVAPRTEVEKMLCEEFAAGLGVPVGITDNFFDLGGHSLMATKLAVRIGRRLIRHHSQGHLRLPCAFQLAKKLESSHSKSYEESGDDIQMADYTAFQLLDLEDPQDFVQSQIRPQLDSCYGTIQDVYPSTQMQKAFLFDPTTGEPRGLVPFYIDFPSNADAETLTKAIGALVDKLDMFRTVFLEAAGDLYQVVVEHLNLPIETIETEKNVNTATGDYLDVHGKDPVRLGHPCIQFAILKTASSVRVLLRMSHALYDGLSFEYIVRGLHVLYSGRNLPPPTQFARYMQYAAHSREEGYPFWREVLQNAPMTVLHDTNNGMSEQEMPASKAVHLSEVVNVPAQAIRNSTNTQATVFNTACALVLAKESGSQDVVFGRIVSGRQGLPVVWQDIIGPCTNAVPVHARVDDGNPQRIIRDLRDQYLRTLPFESLGFEEIKRNCTDWPEELTNFSVCVTYHNFEYHPESEVDNQKVEMGVLAKYVELSENEPLYDLAIAGEVEADGVNLKVTVVAKARLYNEARIRHVLEEVCKTFNGLNEAL.

The condensation 1 stretch occupies residues 53-466; it reads ADDKQRAVGH…VEKVDMMTQE (414 aa). Residues 186-212 form a disordered region; it reads NDEHPRQFETPDSSQATPEEDLQPNPS. Residues 495–887 are adenylation 1; it reads SQSPNKAAVA…GRMDSQVKIR (393 aa). In terms of domain architecture, Carrier 1 spans 1010–1086; that stretch reads SSGTDTYTKL…GLKAIVIGTS (77 aa). An O-(pantetheine 4'-phosphoryl)serine modification is found at Ser-1047. The segment at 1105-1534 is condensation 2; sequence SYAQNRMWFL…ETCISVLPLT (430 aa). The adenylation 2 stretch occupies residues 1563-1960; the sequence is FREQAAANPE…GRMDNQFKIR (398 aa). Positions 2021–2177 are S-adenosyl-L-methionine-dependent N-methyltransferase; the sequence is EGWQDHFESG…YLAEVIDGLI (157 aa). Carrier domains are found at residues 2504–2578 and 2598–2671; these read FPIS…RQGL and APRT…ESSH. Ser-2538 and Ser-2632 each carry O-(pantetheine 4'-phosphoryl)serine. The segment at 2718–3123 is condensation 3; that stretch reads QDVYPSTQMQ…RHVLEEVCKT (406 aa).

Belongs to the ATP-dependent AMP-binding enzyme family. The cofactor is pantetheine 4'-phosphate. The N-terminus is blocked.

It participates in antibiotic biosynthesis; enniatin biosynthesis. Its activity is regulated as follows. The N-methylation activity is inhibited by S-adenosyl-L-homocysteine and sinefugin. In terms of biological role, nonribosomal peptide synthetase that synthesizes enniatin by coupling three D-hydroxycarboxylic acids and three L-amino acids via amide and ester bonds in an alternating fashion. Whereas ESYN1 can accept different amino acids as precursors (L -valine, L-isoleucine or L-leucine), only one species of D-hydroxycarboxylic acid can be found in natural enniatin isolates (D-hydroxyisovaleric acid, D-Hiv). D-Hiv stems from L-valine deanimation by a valine aminotransferase to 2-keto-isovaleric acid (2-Kiv), which becomes subsequently reduced by a keto-isovaleric acid reductase (KivR) to D-Hiv. Peptide bond formation and N-methylation of the amino acid occur before three enzyme-bound dipeptidols are condensed to a hexapeptidol. This Fusarium equiseti (Fusarium scirpi) protein is Enniatin synthase.